A 512-amino-acid polypeptide reads, in one-letter code: Protein disulfide-isomerase (512 aa).

The first 24 residues, 1 to 24 (MAKNVAIFGLLFSLLLLVPSQIFA), serve as a signal peptide directing secretion. Residues 25–144 (EESSTDAKEF…IVEYLKKQSG (120 aa)) form the Thioredoxin 1 domain. Catalysis depends on nucleophile residues C62 and C65. An intrachain disulfide couples C62 to C65. An N-linked (GlcNAc...) asparagine glycan is attached at N278. In terms of domain architecture, Thioredoxin 2 spans 357-485 (YKDGKVEPFV…IIEFIEKNKD (129 aa)). Active-site nucleophile residues include C407 and C410. C407 and C410 form a disulfide bridge. Over residues 487–496 (TGAAHQEVEQ) the composition is skewed to basic and acidic residues. Residues 487-512 (TGAAHQEVEQPKAAAQPEAEQPKDEL) are disordered. The Prevents secretion from ER motif lies at 509–512 (KDEL).

The protein belongs to the protein disulfide isomerase family.

It is found in the endoplasmic reticulum lumen. It carries out the reaction Catalyzes the rearrangement of -S-S- bonds in proteins.. Participates in the folding of proteins containing disulfide bonds, may be involved in glycosylation, prolyl hydroxylation and triglyceride transfer. This chain is Protein disulfide-isomerase (PDI), found in Medicago sativa (Alfalfa).